Here is a 162-residue protein sequence, read N- to C-terminus: NADH-quinone oxidoreductase subunit I (162 aa).

4Fe-4S ferredoxin-type domains follow at residues 53 to 83 and 93 to 122; these read LRRY…IESE and TRYD…EGPN. [4Fe-4S] cluster contacts are provided by cysteine 63, cysteine 66, cysteine 69, cysteine 73, cysteine 102, cysteine 105, cysteine 108, and cysteine 112.

Belongs to the complex I 23 kDa subunit family. NDH-1 is composed of 14 different subunits. Subunits NuoA, H, J, K, L, M, N constitute the membrane sector of the complex. [4Fe-4S] cluster is required as a cofactor.

It is found in the cell inner membrane. The catalysed reaction is a quinone + NADH + 5 H(+)(in) = a quinol + NAD(+) + 4 H(+)(out). NDH-1 shuttles electrons from NADH, via FMN and iron-sulfur (Fe-S) centers, to quinones in the respiratory chain. The immediate electron acceptor for the enzyme in this species is believed to be ubiquinone. Couples the redox reaction to proton translocation (for every two electrons transferred, four hydrogen ions are translocated across the cytoplasmic membrane), and thus conserves the redox energy in a proton gradient. This chain is NADH-quinone oxidoreductase subunit I, found in Erythrobacter litoralis (strain HTCC2594).